We begin with the raw amino-acid sequence, 206 residues long: High frequency lysogenization protein HflD homolog (206 aa).

Belongs to the HflD family.

Its subcellular location is the cytoplasm. The protein localises to the cell inner membrane. The protein is High frequency lysogenization protein HflD homolog of Pseudomonas aeruginosa (strain LESB58).